Here is a 786-residue protein sequence, read N- to C-terminus: Toll-like receptor 1 (786 aa).

Residues 1–24 (MTSIFHFAIIFMLILQIRIQLSEE) form the signal peptide. The Extracellular portion of the chain corresponds to 25–580 (SEFLVDRSKN…HMSELSCNIT (556 aa)). An N-linked (GlcNAc...) asparagine glycan is attached at Asn-51. 19 LRR repeats span residues 54-77 (QNYISELWTSDILSLSKLRILIIS), 78-101 (HNRIQYLDISVFKFNQELEYLDLS), 102-125 (HNKLVKISCHPTVNLKHLDLSFNA), 126-150 (FDALPICKEFGNMSQLKFLGLSTTH), 151-175 (LEKSSVLPIAHLNISKVLLVLGETY), 176-199 (GEKEDPEGLQDFNTESLHIVFPTN), 200-223 (KEFHFILDVSVKTVANLELSNIKC), 224-250 (VLEDNKCSYFLSILAKLQTNPKLSNLT), 251-278 (LNNIETTWNSFIRILQLVWHTTVWYFSI), 279-308 (SNVKLQGQLDFRDFDYSGTSLKALSIHQVV), 309-337 (SDVFGFPQSYIYEIFSNMNIKNFTVSGTR), 338-361 (MVHMLCPSKISPFLHLDFSNNLLT), 362-388 (DTVFENCGHLTELETLILQMNQLKELS), 389-414 (KIAEMTTQMKSLQQLDISQNSVSYDE), 415-437 (KKGDCSWTKSLLSLNMSSNILTD), 438-457 (TIFRCLPPRIKVLDLHSNKI), 458-478 (KSIPKQVVKLEALQELNVAFN), 479-500 (SLTDLPGCGSFSSLSVLIIDHN), and 501-524 (SVSHPSADFFQSCQKMRSIKAGDN). Residues Cys-110 and Cys-132 are joined by a disulfide bond. Residues Asn-137 and Asn-163 are each glycosylated (N-linked (GlcNAc...) asparagine). An intrachain disulfide couples Cys-223 to Cys-230. Positions 313-316 (GFPQ) are interaction with bacterial lipopeptide. N-linked (GlcNAc...) asparagine glycosylation is present at Asn-330. Cys-343 and Cys-368 form a disulfide bridge. Cys-419 and Cys-442 are disulfide-bonded. Asn-429 carries N-linked (GlcNAc...) asparagine glycosylation. Residues 525 to 579 (PFQCTCELGEFVKNIDQVSSEVLEGWPDSYKCDYPESYRGTLLKDFHMSELSCNI) form the LRRCT domain. Asn-578 carries N-linked (GlcNAc...) asparagine glycosylation. Residues 581–601 (LLIVTIVATMLVLAVTVTSLC) traverse the membrane as a helical segment. At 602–786 (SYLDLPWYLR…NIKLTEQAKK (185 aa)) the chain is on the cytoplasmic side. Residues 635–776 (LQFHAFISYS…LFWANLRAAI (142 aa)) enclose the TIR domain.

Belongs to the Toll-like receptor family. In terms of assembly, interacts (via extracellular domain) with TLR2. TLR2 seems to exist in heterodimers with either TLR1 or TLR6 before stimulation by the ligand. The heterodimers form bigger oligomers in response to their corresponding ligands as well as further heterotypic associations with other receptors such as CD14 and/or CD36. The activation cluster TLR2:TLR1:CD14 forms in response to triacylated lipopeptides. Binds MYD88 (via TIR domain). Interacts with CNPY3. Interacts with neutrophil recruitment protein from Aedes aegypti saliva; the interaction probably promotes activation of canonical NF-kappa-B signaling in skin-resident macrophages and subsequent expression of neutrophil chemoattractants. As to expression, ubiquitous. Highly expressed in spleen, ovary, peripheral blood leukocytes, thymus and small intestine.

Its subcellular location is the cell membrane. It localises to the cytoplasmic vesicle. The protein resides in the phagosome membrane. It is found in the membrane raft. The protein localises to the golgi apparatus. In terms of biological role, participates in the innate immune response to microbial agents. Specifically recognizes diacylated and triacylated lipopeptides. Cooperates with TLR2 to mediate the innate immune response to bacterial lipoproteins or lipopeptides. Forms the activation cluster TLR2:TLR1:CD14 in response to triacylated lipopeptides, this cluster triggers signaling from the cell surface and subsequently is targeted to the Golgi in a lipid-raft dependent pathway. Acts via MYD88 and TRAF6, leading to NF-kappa-B activation, cytokine secretion and the inflammatory response. In Homo sapiens (Human), this protein is Toll-like receptor 1 (TLR1).